Here is a 158-residue protein sequence, read N- to C-terminus: 2-C-methyl-D-erythritol 2,4-cyclodiphosphate synthase (158 aa).

Residues aspartate 9 and histidine 11 each coordinate a divalent metal cation. 4-CDP-2-C-methyl-D-erythritol 2-phosphate-binding positions include 9–11 and 35–36; these read DVH and HS. A divalent metal cation is bound at residue histidine 43. Residues 57 to 59, 62 to 66, 101 to 107, 133 to 136, phenylalanine 140, and arginine 143 each bind 4-CDP-2-C-methyl-D-erythritol 2-phosphate; these read DIG, FPDTD, AQKPKMA, and TTTE.

This sequence belongs to the IspF family. Homotrimer. The cofactor is a divalent metal cation.

The catalysed reaction is 4-CDP-2-C-methyl-D-erythritol 2-phosphate = 2-C-methyl-D-erythritol 2,4-cyclic diphosphate + CMP. It functions in the pathway isoprenoid biosynthesis; isopentenyl diphosphate biosynthesis via DXP pathway; isopentenyl diphosphate from 1-deoxy-D-xylulose 5-phosphate: step 4/6. Its function is as follows. Involved in the biosynthesis of isopentenyl diphosphate (IPP) and dimethylallyl diphosphate (DMAPP), two major building blocks of isoprenoid compounds. Catalyzes the conversion of 4-diphosphocytidyl-2-C-methyl-D-erythritol 2-phosphate (CDP-ME2P) to 2-C-methyl-D-erythritol 2,4-cyclodiphosphate (ME-CPP) with a corresponding release of cytidine 5-monophosphate (CMP). This chain is 2-C-methyl-D-erythritol 2,4-cyclodiphosphate synthase, found in Geobacillus sp. (strain WCH70).